We begin with the raw amino-acid sequence, 395 residues long: Flavohemoprotein (395 aa).

Residues 1–136 (MLDQQTIATI…LANVFIQRES (136 aa)) form the Globin domain. Histidine 85 lines the heme b pocket. Catalysis depends on charge relay system residues tyrosine 95 and glutamate 135. The interval 147-395 (GGWHGIRPFR…YECFGPHKVI (249 aa)) is reductase. One can recognise an FAD-binding FR-type domain in the interval 150 to 255 (HGIRPFRIVA…AAPHGDFYLE (106 aa)). Residues tyrosine 188 and 204 to 207 (RQYS) each bind FAD. 268-273 (GVGQTP) is an NADP(+) binding site. 388-391 (CFGP) contributes to the FAD binding site.

It belongs to the globin family. Two-domain flavohemoproteins subfamily. The protein in the C-terminal section; belongs to the flavoprotein pyridine nucleotide cytochrome reductase family. Heme b serves as cofactor. The cofactor is FAD.

The protein resides in the cytoplasm. It carries out the reaction 2 nitric oxide + NADPH + 2 O2 = 2 nitrate + NADP(+) + H(+). The enzyme catalyses 2 nitric oxide + NADH + 2 O2 = 2 nitrate + NAD(+) + H(+). Its function is as follows. Is involved in NO detoxification in an aerobic process, termed nitric oxide dioxygenase (NOD) reaction that utilizes O(2) and NAD(P)H to convert NO to nitrate, which protects the bacterium from various noxious nitrogen compounds. Therefore, plays a central role in the inducible response to nitrosative stress. This is Flavohemoprotein (hmp) from Dickeya dadantii (strain 3937) (Erwinia chrysanthemi (strain 3937)).